The primary structure comprises 537 residues: P2Y purinoceptor 4 (537 aa).

At 1 to 49 (MTEDIMATSYPTFLTTPYLPMKLLMNLTNDTEDICVFDEGFKFLLLPVS) the chain is on the extracellular side. N-linked (GlcNAc...) asparagine glycans are attached at residues N26 and N29. Residues 50-70 (YSAVFMVGLPLNIAAMWIFIA) form a helical membrane-spanning segment. The Cytoplasmic segment spans residues 71 to 79 (KMRPWNPTT). A helical transmembrane segment spans residues 80–100 (VYMFNLALSDTLYVLSLPTLV). Residues 101–118 (YYYADKNNWPFGEVLCKL) are Extracellular-facing. Residues C116 and C193 are joined by a disulfide bond. A helical transmembrane segment spans residues 119–139 (VRFLFYANLYSSILFLTCISV). The Cytoplasmic portion of the chain corresponds to 140 to 161 (HRYRGVCHPITSLRRMNAKHAY). Residues 162-182 (VICALVWLSVTLCLVPNLIFV) form a helical membrane-spanning segment. Over 183–210 (TVSPKVKNTICHDTTRPEDFARYVEYST) the chain is Extracellular. Residues 211 to 231 (AIMCLLFGIPCLIIAGCYGLM) traverse the membrane as a helical segment. Residues 232 to 254 (TRELMKPIVSGNQQTLPSYKKRS) lie on the Cytoplasmic side of the membrane. A helical membrane pass occupies residues 255 to 275 (IKTIIFVMIAFAICFMPFHIT). The Extracellular segment spans residues 276-292 (RTLYYYARLLGIKCYAL). A helical transmembrane segment spans residues 293 to 316 (NVINVTYKVTRPLASANSCIDPIL). Topologically, residues 317–537 (YFLANDRYRR…EKELQNFPKA (221 aa)) are cytoplasmic. The disordered stretch occupies residues 401–505 (NRRSTIKRNS…GEGTSTWNLL (105 aa)). 2 stretches are compositionally biased toward basic and acidic residues: residues 409-423 (NSTD…RHGE) and 431-447 (VVEK…RKTT). The span at 448 to 465 (EQSSKTNAEQDELQTQID) shows a compositional bias: polar residues.

Belongs to the G-protein coupled receptor 1 family.

The protein localises to the cell membrane. Receptor for extracellular ATP, UTP, CTP, GTP and ITP. The activity of this receptor is mediated by G proteins which activate a phosphatidylinositol-calcium second messenger system. May play a key role in the early development of neural tissue. The protein is P2Y purinoceptor 4 (p2ry4) of Xenopus laevis (African clawed frog).